Consider the following 295-residue polypeptide: Elongation factor Ts (295 aa).

The interval 79–82 (TDFV) is involved in Mg(2+) ion dislocation from EF-Tu.

This sequence belongs to the EF-Ts family.

Its subcellular location is the cytoplasm. Associates with the EF-Tu.GDP complex and induces the exchange of GDP to GTP. It remains bound to the aminoacyl-tRNA.EF-Tu.GTP complex up to the GTP hydrolysis stage on the ribosome. The sequence is that of Elongation factor Ts from Mycoplasma capricolum subsp. capricolum (strain California kid / ATCC 27343 / NCTC 10154).